A 696-amino-acid chain; its full sequence is HIPL2 protein (696 aa).

Positions 1-24 (MAKTNQAITICSLLLLLLLSETTS) are cleaved as a signal peptide. N-linked (GlcNAc...) asparagine glycosylation is found at Asn-38, Asn-69, Asn-74, Asn-108, Asn-124, Asn-148, Asn-175, Asn-339, Asn-431, Asn-513, Asn-519, Asn-528, Asn-581, and Asn-651. Residue Ser-672 is the site of GPI-anchor amidated serine attachment. Positions 673–696 (SARKLCFSVFLLLSLLMMFLTLLD) are cleaved as a propeptide — removed in mature form.

Belongs to the PQQ oxidoreductase GdhB family. The cofactor is pyrroloquinoline quinone.

It is found in the cell membrane. This is HIPL2 protein (HIPL2) from Arabidopsis thaliana (Mouse-ear cress).